The following is a 246-amino-acid chain: Ribonuclease 3 (246 aa).

The RNase III domain occupies 16–146 (ATELEAGIGY…LLAAVYLDGG (131 aa)). Mg(2+) is bound at residue glutamate 59. Aspartate 63 is an active-site residue. Residues asparagine 132 and glutamate 135 each contribute to the Mg(2+) site. Residue glutamate 135 is part of the active site. Residues 173–242 (DFKTEFQEMV…ARQVLARFAA (70 aa)) enclose the DRBM domain.

It belongs to the ribonuclease III family. As to quaternary structure, homodimer. The cofactor is Mg(2+).

It is found in the cytoplasm. It carries out the reaction Endonucleolytic cleavage to 5'-phosphomonoester.. Digests double-stranded RNA. Involved in the processing of primary rRNA transcript to yield the immediate precursors to the large and small rRNAs (23S and 16S). Processes some mRNAs, and tRNAs when they are encoded in the rRNA operon. Processes pre-crRNA and tracrRNA of type II CRISPR loci if present in the organism. This Geobacter metallireducens (strain ATCC 53774 / DSM 7210 / GS-15) protein is Ribonuclease 3.